Reading from the N-terminus, the 371-residue chain is DNA replication and repair protein RecF (371 aa).

ATP is bound at residue 30-37 (GENAQGKT).

This sequence belongs to the RecF family.

Its subcellular location is the cytoplasm. Functionally, the RecF protein is involved in DNA metabolism; it is required for DNA replication and normal SOS inducibility. RecF binds preferentially to single-stranded, linear DNA. It also seems to bind ATP. The chain is DNA replication and repair protein RecF from Staphylococcus epidermidis (strain ATCC 12228 / FDA PCI 1200).